The following is a 140-amino-acid chain: Nucleoside diphosphate kinase (140 aa).

ATP-binding residues include Lys11, Phe59, Arg87, Thr93, Arg104, and Asn114. Residue His117 is the Pros-phosphohistidine intermediate of the active site.

It belongs to the NDK family. In terms of assembly, homotetramer. Mg(2+) is required as a cofactor.

The protein resides in the cytoplasm. It catalyses the reaction a 2'-deoxyribonucleoside 5'-diphosphate + ATP = a 2'-deoxyribonucleoside 5'-triphosphate + ADP. The catalysed reaction is a ribonucleoside 5'-diphosphate + ATP = a ribonucleoside 5'-triphosphate + ADP. Its function is as follows. Major role in the synthesis of nucleoside triphosphates other than ATP. The ATP gamma phosphate is transferred to the NDP beta phosphate via a ping-pong mechanism, using a phosphorylated active-site intermediate. This chain is Nucleoside diphosphate kinase, found in Rickettsia akari (strain Hartford).